Reading from the N-terminus, the 422-residue chain is Glucose-1-phosphate adenylyltransferase 2 (422 aa).

Residues Y110, G175, 190 to 191 (EK), and S208 contribute to the alpha-D-glucose 1-phosphate site.

The protein belongs to the bacterial/plant glucose-1-phosphate adenylyltransferase family. Homotetramer.

It catalyses the reaction alpha-D-glucose 1-phosphate + ATP + H(+) = ADP-alpha-D-glucose + diphosphate. It functions in the pathway glycan biosynthesis; glycogen biosynthesis. Functionally, involved in the biosynthesis of ADP-glucose, a building block required for the elongation reactions to produce glycogen. Catalyzes the reaction between ATP and alpha-D-glucose 1-phosphate (G1P) to produce pyrophosphate and ADP-Glc. This is Glucose-1-phosphate adenylyltransferase 2 from Alkalilimnicola ehrlichii (strain ATCC BAA-1101 / DSM 17681 / MLHE-1).